The sequence spans 135 residues: Large ribosomal subunit protein uL18 (135 aa).

Residues 1-23 (MSQTANQKAKRIPLGKDASTKRR) form a disordered region.

It belongs to the universal ribosomal protein uL18 family. In terms of assembly, part of the 50S ribosomal subunit; part of the 5S rRNA/L5/L18/L25 subcomplex. Contacts the 5S and 23S rRNAs.

Its function is as follows. This is one of the proteins that bind and probably mediate the attachment of the 5S RNA into the large ribosomal subunit, where it forms part of the central protuberance. This Rhodococcus jostii (strain RHA1) protein is Large ribosomal subunit protein uL18.